The following is a 150-amino-acid chain: Probable cyclase FGR4 (150 aa).

Its pathway is secondary metabolite biosynthesis. Functionally, probable cyclase; part of the gene cluster that mediates the biosynthesis of the tetraketides fugralins such as linear fugralin A and cyclic fugralin B, volatile compounds that play a role in the asexual reproductive cycle but are not involved in pathogenicity. Fugralin B is similar to fugralin A except for a cyclization between the carboxylic acid C-8 and the alcohol on C-4 resulting in a six membered lactone ring, probably catalyzed by the cyclase FGR4. One of the key features of fugralins is the presence of a double methyl group, which is only rarely encountered in fungal secondary metabolites. As the fugralins cluster does not contain an independent methyltransferase, the PKS FGR1 is probably responsible for adding two methyl groups to the same carbon atom. The exact role of the individual cluster genes remains unknown and further work is needed to unravel the biosynthetic pathway. The polypeptide is Probable cyclase FGR4 (Gibberella zeae (strain ATCC MYA-4620 / CBS 123657 / FGSC 9075 / NRRL 31084 / PH-1) (Wheat head blight fungus)).